Reading from the N-terminus, the 404-residue chain is Formate-dependent phosphoribosylglycinamide formyltransferase (404 aa).

N(1)-(5-phospho-beta-D-ribosyl)glycinamide contacts are provided by residues 25 to 26 (EL) and Glu85. ATP-binding positions include Arg118, Lys159, 164–169 (SSGKGQ), 199–202 (EGFI), and Glu207. Positions 123-318 (RLAAEELGLP…EFELHARAIL (196 aa)) constitute an ATP-grasp domain. Mg(2+) is bound by residues Glu277 and Glu289. N(1)-(5-phospho-beta-D-ribosyl)glycinamide is bound by residues Asp296, Lys365, and 372-373 (RR). The segment at 384-404 (TDEARSRAKQAAAAVRPVSAK) is disordered. Low complexity predominate over residues 392–404 (KQAAAAVRPVSAK).

The protein belongs to the PurK/PurT family. In terms of assembly, homodimer.

It catalyses the reaction N(1)-(5-phospho-beta-D-ribosyl)glycinamide + formate + ATP = N(2)-formyl-N(1)-(5-phospho-beta-D-ribosyl)glycinamide + ADP + phosphate + H(+). It functions in the pathway purine metabolism; IMP biosynthesis via de novo pathway; N(2)-formyl-N(1)-(5-phospho-D-ribosyl)glycinamide from N(1)-(5-phospho-D-ribosyl)glycinamide (formate route): step 1/1. Its function is as follows. Involved in the de novo purine biosynthesis. Catalyzes the transfer of formate to 5-phospho-ribosyl-glycinamide (GAR), producing 5-phospho-ribosyl-N-formylglycinamide (FGAR). Formate is provided by PurU via hydrolysis of 10-formyl-tetrahydrofolate. This chain is Formate-dependent phosphoribosylglycinamide formyltransferase, found in Paraburkholderia xenovorans (strain LB400).